Reading from the N-terminus, the 515-residue chain is Maturase K (515 aa).

This sequence belongs to the intron maturase 2 family. MatK subfamily.

The protein resides in the plastid. It is found in the chloroplast. Its function is as follows. Usually encoded in the trnK tRNA gene intron. Probably assists in splicing its own and other chloroplast group II introns. This Pinus banksiana (Jack pine) protein is Maturase K.